The following is a 102-amino-acid chain: Integration host factor subunit alpha (102 aa).

The segment at 49–70 (FGNFQLRTKPQRPGRNPKTGEE) is disordered.

It belongs to the bacterial histone-like protein family. In terms of assembly, heterodimer of an alpha and a beta chain.

In terms of biological role, this protein is one of the two subunits of integration host factor, a specific DNA-binding protein that functions in genetic recombination as well as in transcriptional and translational control. The polypeptide is Integration host factor subunit alpha (Nitrosomonas europaea (strain ATCC 19718 / CIP 103999 / KCTC 2705 / NBRC 14298)).